Reading from the N-terminus, the 513-residue chain is Alpha-amylase mde5 (513 aa).

The signal sequence occupies residues 1–25 (MKHNEVFGWTLKVLSFLLVVIPANA). Residues Cys52 and Cys60 are joined by a disulfide bond. Trp105 lines the substrate pocket. Asn143 is a binding site for Ca(2+). Residue His144 coordinates substrate. The N-linked (GlcNAc...) asparagine glycan is linked to Asn162. The cysteines at positions 171 and 184 are disulfide-linked. Positions 182 and 195 each coordinate Ca(2+). Arg224 serves as a coordination point for substrate. Asp226, His230, and Glu250 together coordinate Ca(2+). Asp226 serves as the catalytic Nucleophile. Position 229–230 (229–230 (KH)) interacts with substrate. The active-site Proton donor is Glu250. A substrate-binding site is contributed by Gly254. Cys260 and Cys304 are joined by a disulfide. Asp318 lines the substrate pocket. Asn357 carries an N-linked (GlcNAc...) asparagine glycan. Arg365 is a substrate binding site. Cys454 and Cys488 form a disulfide bridge.

Belongs to the glycosyl hydrolase 13 family. Ca(2+) serves as cofactor.

Its subcellular location is the endoplasmic reticulum. It carries out the reaction Endohydrolysis of (1-&gt;4)-alpha-D-glucosidic linkages in polysaccharides containing three or more (1-&gt;4)-alpha-linked D-glucose units.. This Schizosaccharomyces pombe (strain 972 / ATCC 24843) (Fission yeast) protein is Alpha-amylase mde5 (mde5).